The primary structure comprises 426 residues: Adenylosuccinate synthetase (426 aa).

Residues 12–18 and 40–42 contribute to the GTP site; these read GDEGKGK and GHT. Asp13 serves as the catalytic Proton acceptor. Mg(2+) is bound by residues Asp13 and Gly40. IMP-binding positions include 13-16, 38-41, Thr131, Arg145, Gln226, Thr241, and Arg305; these read DEGK and NAGH. Residue His41 is the Proton donor of the active site. 301–307 is a binding site for substrate; sequence ATTGRKR. GTP is bound by residues Arg307, 333–335, and 415–417; these read KLD and SVG.

It belongs to the adenylosuccinate synthetase family. Homodimer. The cofactor is Mg(2+).

The protein localises to the cytoplasm. It catalyses the reaction IMP + L-aspartate + GTP = N(6)-(1,2-dicarboxyethyl)-AMP + GDP + phosphate + 2 H(+). It functions in the pathway purine metabolism; AMP biosynthesis via de novo pathway; AMP from IMP: step 1/2. Its function is as follows. Plays an important role in the de novo pathway of purine nucleotide biosynthesis. Catalyzes the first committed step in the biosynthesis of AMP from IMP. In Nitratidesulfovibrio vulgaris (strain DP4) (Desulfovibrio vulgaris), this protein is Adenylosuccinate synthetase.